The following is a 78-amino-acid chain: Conotoxin Cal6.3a (78 aa).

A signal peptide spans 1-21 (MRFLHFLIVAVLLASFMESGA). The propeptide occupies 22–26 (MPRNP). 3 disulfide bridges follow: cysteine 38/cysteine 49, cysteine 41/cysteine 53, and cysteine 48/cysteine 56. Glutamine 76 carries the post-translational modification Glutamine amide.

In terms of tissue distribution, expressed by the venom duct.

The protein localises to the secreted. Its function is as follows. Probable neurotoxin with unknown target. Possibly targets ion channels. The polypeptide is Conotoxin Cal6.3a (Californiconus californicus (California cone)).